The chain runs to 612 residues: MACPF domain-containing protein NSL1 (612 aa).

One can recognise an MACPF domain in the interval 5-338 (NFTRLDAHSA…PPIEELHQFL (334 aa)).

This sequence belongs to the complement C6/C7/C8/C9 (TC 1.C.39) family.

Negatively controls the salicylic acid (SA)-mediated pathway of programmed cell death in plant immunity. The chain is MACPF domain-containing protein NSL1 (NSL1) from Arabidopsis thaliana (Mouse-ear cress).